Reading from the N-terminus, the 400-residue chain is Nicotinate phosphoribosyltransferase (400 aa).

Histidine 220 bears the Phosphohistidine; by autocatalysis mark.

It belongs to the NAPRTase family. Post-translationally, transiently phosphorylated on a His residue during the reaction cycle. Phosphorylation strongly increases the affinity for substrates and increases the rate of nicotinate D-ribonucleotide production. Dephosphorylation regenerates the low-affinity form of the enzyme, leading to product release.

It catalyses the reaction nicotinate + 5-phospho-alpha-D-ribose 1-diphosphate + ATP + H2O = nicotinate beta-D-ribonucleotide + ADP + phosphate + diphosphate. It functions in the pathway cofactor biosynthesis; NAD(+) biosynthesis; nicotinate D-ribonucleotide from nicotinate: step 1/1. Its function is as follows. Catalyzes the synthesis of beta-nicotinate D-ribonucleotide from nicotinate and 5-phospho-D-ribose 1-phosphate at the expense of ATP. In Escherichia coli (strain K12 / MC4100 / BW2952), this protein is Nicotinate phosphoribosyltransferase.